Reading from the N-terminus, the 1119-residue chain is G8 domain-containing protein DDB_G0288475 (1119 aa).

A signal peptide spans 1–22 (MKYSSFLLLFIYIFFILNNINA). A G8 domain is found at 276 to 404 (TIWTSGVVPL…YHNTWTKLAA (129 aa)). N-linked (GlcNAc...) asparagine glycosylation is found at N308, N559, N736, N854, N968, N1035, N1056, and N1070.

The protein belongs to the comF family.

The protein resides in the secreted. This chain is G8 domain-containing protein DDB_G0288475, found in Dictyostelium discoideum (Social amoeba).